The primary structure comprises 511 residues: ATP synthase subunit beta, mitochondrial (511 aa).

The transit peptide at 1-33 (MVLPRLYTATSRAAFKAAKQSAPLLSTSWKRCM) directs the protein to the mitochondrion. Thr-112 carries the post-translational modification Phosphothreonine. Residue 190-197 (GGAGVGKT) participates in ATP binding. Thr-237 bears the Phosphothreonine mark. Ser-373 carries the post-translational modification Phosphoserine.

This sequence belongs to the ATPase alpha/beta chains family. In terms of assembly, F-type ATPases have 2 components, CF(1) - the catalytic core - and CF(0) - the membrane proton channel. CF(1) has five subunits: alpha(3), beta(3), gamma(1), delta(1), epsilon(1). CF(0) has three main subunits: a, b and c.

The protein resides in the mitochondrion. The protein localises to the mitochondrion inner membrane. The enzyme catalyses ATP + H2O + 4 H(+)(in) = ADP + phosphate + 5 H(+)(out). Its function is as follows. Mitochondrial membrane ATP synthase (F(1)F(0) ATP synthase or Complex V) produces ATP from ADP in the presence of a proton gradient across the membrane which is generated by electron transport complexes of the respiratory chain. F-type ATPases consist of two structural domains, F(1) - containing the extramembraneous catalytic core, and F(0) - containing the membrane proton channel, linked together by a central stalk and a peripheral stalk. During catalysis, ATP synthesis in the catalytic domain of F(1) is coupled via a rotary mechanism of the central stalk subunits to proton translocation. Subunits alpha and beta form the catalytic core in F(1). Rotation of the central stalk against the surrounding alpha(3)beta(3) subunits leads to hydrolysis of ATP in three separate catalytic sites on the beta subunits. In Saccharomyces cerevisiae (strain ATCC 204508 / S288c) (Baker's yeast), this protein is ATP synthase subunit beta, mitochondrial (ATP2).